Here is a 209-residue protein sequence, read N- to C-terminus: RNA chaperone ProQ (209 aa).

Positions 105–148 are disordered; sequence ESQDKAKAKRAALAPKPAAKKAPKKVAVPQRAKTERPAKPAPKA.

The protein belongs to the ProQ family.

It is found in the cytoplasm. Functionally, RNA chaperone with significant RNA binding, RNA strand exchange and RNA duplexing activities. The chain is RNA chaperone ProQ from Shewanella baltica (strain OS223).